A 180-amino-acid polypeptide reads, in one-letter code: Large ribosomal subunit protein uL6 (180 aa).

It belongs to the universal ribosomal protein uL6 family. Part of the 50S ribosomal subunit.

Functionally, this protein binds to the 23S rRNA, and is important in its secondary structure. It is located near the subunit interface in the base of the L7/L12 stalk, and near the tRNA binding site of the peptidyltransferase center. This chain is Large ribosomal subunit protein uL6, found in Christiangramia forsetii (strain DSM 17595 / CGMCC 1.15422 / KT0803) (Gramella forsetii).